A 190-amino-acid polypeptide reads, in one-letter code: Venom nerve growth factor (190 aa).

Residues 1–7 form the signal peptide; sequence FLIGIWA. Positions 8-111 are excised as a propeptide; sequence APKSEDNVPL…SLNRNIRAKR (104 aa). A disulfide bridge links C125 with C190. An N-linked (GlcNAc...) asparagine glycan is attached at N134.

The protein belongs to the NGF-beta family. As to quaternary structure, homodimer; non-covalently linked. Glycosylated. As to expression, expressed by the venom gland.

The protein localises to the secreted. In terms of biological role, nerve growth factor is important for the development and maintenance of the sympathetic and sensory nervous systems. It stimulates division and differentiation of sympathetic and embryonic sensory neurons as well as basal forebrain cholinergic neurons in the brain. Its relevance in the snake venom is not clear. However, it has been shown to inhibit metalloproteinase-dependent proteolysis of platelet glycoprotein Ib alpha, suggesting a metalloproteinase inhibition to prevent metalloprotease autodigestion and/or protection against prey proteases. Binds a lipid between the two protein chains in the homodimer. The lipid-bound form promotes histamine relase from mouse mast cells, contrary to the lipid-free form. The sequence is that of Venom nerve growth factor from Agkistrodon contortrix contortrix (Southern copperhead).